A 904-amino-acid polypeptide reads, in one-letter code: Thiamine diphosphate dependent-3-acetyloctanal synthase PigD (904 aa).

A disordered region spans residues 879–904 (RKAWAAQQPESTSTAFDQDPTQEATS). A compositionally biased stretch (polar residues) spans 886 to 904 (QPESTSTAFDQDPTQEATS).

Belongs to the TPP enzyme family. The cofactor is thiamine diphosphate.

The catalysed reaction is (2E)-octenal + pyruvate + H(+) = (S)-3-acetyloctanal + CO2. It functions in the pathway antibiotic biosynthesis; prodigiosin biosynthesis. Functionally, involved in the biosynthesis of 2-methyl-3-n-amyl-pyrrole (MAP), one of the terminal products involved in the biosynthesis of the red antibiotic prodigiosin (Pig). Catalyzes the decarboxylation of pyruvate, followed by the modification of the resulting two-carbon fragment acetaldehyde at the C3 position of the 2-octenal (1,2-addition of acetaldehyde) giving 3-acetyloctanal. In vitro, it can act on a number of alpha,beta-unsaturated carbonyl compounds, including aldehydes and ketones, and can catalyze both 1,2-addition and Stetter-type 1,4-addition depending on the substrate. The chain is Thiamine diphosphate dependent-3-acetyloctanal synthase PigD from Serratia marcescens.